We begin with the raw amino-acid sequence, 92 residues long: Small ribosomal subunit protein bS18 (92 aa).

It belongs to the bacterial ribosomal protein bS18 family. As to quaternary structure, part of the 30S ribosomal subunit. Forms a tight heterodimer with protein bS6.

In terms of biological role, binds as a heterodimer with protein bS6 to the central domain of the 16S rRNA, where it helps stabilize the platform of the 30S subunit. This is Small ribosomal subunit protein bS18 from Chlorobium chlorochromatii (strain CaD3).